Reading from the N-terminus, the 652-residue chain is MYLSIIILPLLGCIVSGFLGRKVGVKGAQLITCSNVVITTILSILAFIEVGFNNIPVTINLFRWIDSEWFNIIWGFQFDSLTVSMLIPVLIISSLVHIYSISYMSSDPHNQRFFSYLSLFTFMMIILVTANNYLLMFVGWEGVGVCSYLLVSFWFTRIAANQSSISAFLANRVGDCFLTIGMFAILWSLGNLDYSTVFSLAPYINSKVVLIIGICLLIGAMAKSSQVGLHVWLPMAMEGPTPVSALIHAATMVTAGVYLLMRSSPLIEYNSTVLLLCLWLGAITTVFSSLIGLFQQDIKKVIAYSTMSQLGMMVIAIGLSSYNVALFHLINHAFYKALLFLGAGSVIHAVADNQDFRKYGGLINFLPLTYSVMLIASLSLVAFPFMTGFYSKDFILESAYGQFSFSGVAVYIIATIGAIFTTLYSVKVLYLTFLSNPNGTRAYYNYKPALEGDLFLTLPLIILAIFSIFFGFITKDIFIGLGSNFFGDNSLFIHPTHEIMIDTEFAVPVLFKLLPFIFTISFSIIALTISEFLSELVIYFKLSRLGYNIFGFFNQRFLIELFYNKYITNLILDLGGQMTKILDKGSIELFGPFGLEKGLVNFSKNISSLSTSHVTTYALYILVAFILYLLYNYLSFNFLPFLIAGLTILTTI.

Transmembrane regions (helical) follow at residues 1–21 (MYLSIIILPLLGCIVSGFLGR), 30–50 (LITCSNVVITTILSILAFIEV), 72–92 (IIWGFQFDSLTVSMLIPVLII), 119–139 (LFTFMMIILVTANNYLLMFVG), 140–160 (WEGVGVCSYLLVSFWFTRIAA), 177–197 (FLTIGMFAILWSLGNLDYSTV), 200–220 (LAPYINSKVVLIIGICLLIGA), 241–261 (TPVSALIHAATMVTAGVYLLM), 274–294 (LLLCLWLGAITTVFSSLIGLF), 301–319 (VIAYSTMSQLGMMVIAIGL), 331–351 (NHAFYKALLFLGAGSVIHAVA), 365–385 (FLPLTYSVMLIASLSLVAFPF), 403–423 (FSFSGVAVYIIATIGAIFTTL), 454–474 (LFLTLPLIILAIFSIFFGFIT), 505–525 (FAVPVLFKLLPFIFTISFSII), and 619–639 (LYILVAFILYLLYNYLSFNFL).

Belongs to the complex I subunit 5 family.

The protein resides in the mitochondrion inner membrane. It carries out the reaction a ubiquinone + NADH + 5 H(+)(in) = a ubiquinol + NAD(+) + 4 H(+)(out). In terms of biological role, core subunit of the mitochondrial membrane respiratory chain NADH dehydrogenase (Complex I) that is believed to belong to the minimal assembly required for catalysis. Complex I functions in the transfer of electrons from NADH to the respiratory chain. The immediate electron acceptor for the enzyme is believed to be ubiquinone. The polypeptide is NADH-ubiquinone oxidoreductase chain 5 (ND5) (Podospora anserina (strain S / ATCC MYA-4624 / DSM 980 / FGSC 10383) (Pleurage anserina)).